The primary structure comprises 329 residues: tRNA pseudouridine synthase B (329 aa).

His-43 is a binding site for substrate. Asp-48 functions as the Nucleophile in the catalytic mechanism. Substrate contacts are provided by Tyr-76, Tyr-179, and Leu-200.

Belongs to the pseudouridine synthase TruB family. Type 1 subfamily.

The catalysed reaction is uridine(55) in tRNA = pseudouridine(55) in tRNA. In terms of biological role, responsible for synthesis of pseudouridine from uracil-55 in the psi GC loop of transfer RNAs. This Yersinia enterocolitica serotype O:8 / biotype 1B (strain NCTC 13174 / 8081) protein is tRNA pseudouridine synthase B.